A 375-amino-acid polypeptide reads, in one-letter code: Probable neutral protease 2 homolog ARB_05817 (375 aa).

A signal peptide spans methionine 1–glycine 19. Residues phenylalanine 20 to arginine 189 constitute a propeptide that is removed on maturation. 2 cysteine pairs are disulfide-bonded: cysteine 197/cysteine 267 and cysteine 274/cysteine 292. Position 317 (histidine 317) interacts with Zn(2+). The active site involves glutamate 318. Residues histidine 321 and aspartate 332 each contribute to the Zn(2+) site.

Belongs to the peptidase M35 family. Zn(2+) is required as a cofactor.

It localises to the secreted. It carries out the reaction Preferential cleavage of bonds with hydrophobic residues in P1'. Also 3-Asn-|-Gln-4 and 8-Gly-|-Ser-9 bonds in insulin B chain.. Its function is as follows. Probable secreted metalloprotease that shows high activities on basic nuclear substrates such as histone and protamine. May be involved in virulence. The chain is Probable neutral protease 2 homolog ARB_05817 from Arthroderma benhamiae (strain ATCC MYA-4681 / CBS 112371) (Trichophyton mentagrophytes).